The primary structure comprises 352 residues: Holliday junction branch migration complex subunit RuvB (352 aa).

The interval 13–201 is large ATPase domain (RuvB-L); it reads FSLRKKELRL…FGISQKIEFY (189 aa). Residues Arg41, Gly82, Lys85, Thr86, Thr87, 148 to 150, Arg191, Tyr201, and Arg238 contribute to the ATP site; that span reads EDF. Thr86 contributes to the Mg(2+) binding site. The interval 202–273 is small ATPAse domain (RuvB-S); the sequence is TYDELKQIIV…LIKKALNSYQ (72 aa). Positions 276–352 are head domain (RuvB-H); that stretch reads EKGLDSLDRN…KYIDSKNENF (77 aa). Residues Arg330 and Arg335 each contribute to the DNA site.

Belongs to the RuvB family. As to quaternary structure, homohexamer. Forms an RuvA(8)-RuvB(12)-Holliday junction (HJ) complex. HJ DNA is sandwiched between 2 RuvA tetramers; dsDNA enters through RuvA and exits via RuvB. An RuvB hexamer assembles on each DNA strand where it exits the tetramer. Each RuvB hexamer is contacted by two RuvA subunits (via domain III) on 2 adjacent RuvB subunits; this complex drives branch migration. In the full resolvosome a probable DNA-RuvA(4)-RuvB(12)-RuvC(2) complex forms which resolves the HJ.

The protein resides in the cytoplasm. The catalysed reaction is ATP + H2O = ADP + phosphate + H(+). The RuvA-RuvB-RuvC complex processes Holliday junction (HJ) DNA during genetic recombination and DNA repair, while the RuvA-RuvB complex plays an important role in the rescue of blocked DNA replication forks via replication fork reversal (RFR). RuvA specifically binds to HJ cruciform DNA, conferring on it an open structure. The RuvB hexamer acts as an ATP-dependent pump, pulling dsDNA into and through the RuvAB complex. RuvB forms 2 homohexamers on either side of HJ DNA bound by 1 or 2 RuvA tetramers; 4 subunits per hexamer contact DNA at a time. Coordinated motions by a converter formed by DNA-disengaged RuvB subunits stimulates ATP hydrolysis and nucleotide exchange. Immobilization of the converter enables RuvB to convert the ATP-contained energy into a lever motion, pulling 2 nucleotides of DNA out of the RuvA tetramer per ATP hydrolyzed, thus driving DNA branch migration. The RuvB motors rotate together with the DNA substrate, which together with the progressing nucleotide cycle form the mechanistic basis for DNA recombination by continuous HJ branch migration. Branch migration allows RuvC to scan DNA until it finds its consensus sequence, where it cleaves and resolves cruciform DNA. This chain is Holliday junction branch migration complex subunit RuvB, found in Prochlorococcus marinus (strain MIT 9215).